A 268-amino-acid polypeptide reads, in one-letter code: Ribosomal RNA small subunit methyltransferase A (268 aa).

S-adenosyl-L-methionine contacts are provided by asparagine 21, leucine 23, glycine 48, glutamate 69, aspartate 94, and asparagine 115.

This sequence belongs to the class I-like SAM-binding methyltransferase superfamily. rRNA adenine N(6)-methyltransferase family. RsmA subfamily.

The protein localises to the cytoplasm. The enzyme catalyses adenosine(1518)/adenosine(1519) in 16S rRNA + 4 S-adenosyl-L-methionine = N(6)-dimethyladenosine(1518)/N(6)-dimethyladenosine(1519) in 16S rRNA + 4 S-adenosyl-L-homocysteine + 4 H(+). Specifically dimethylates two adjacent adenosines (A1518 and A1519) in the loop of a conserved hairpin near the 3'-end of 16S rRNA in the 30S particle. May play a critical role in biogenesis of 30S subunits. The polypeptide is Ribosomal RNA small subunit methyltransferase A (Saccharophagus degradans (strain 2-40 / ATCC 43961 / DSM 17024)).